Here is a 758-residue protein sequence, read N- to C-terminus: Protein hunchback (758 aa).

2 disordered regions span residues 30–51 (EPGHHLDGNSVASSPRQSPIPS) and 172–214 (EKLQ…EDMK). Over residues 39 to 51 (SVASSPRQSPIPS) the composition is skewed to polar residues. Phosphothreonine is present on Thr178. Phosphoserine occurs at positions 188, 207, 209, and 210. The segment covering 198–214 (EPEKEHDQMSNSSEDMK) has biased composition (basic and acidic residues). 4 consecutive C2H2-type zinc fingers follow at residues 240 to 262 (YKCKTCGVVAITKVDFWAHTRTH), 269 to 291 (LQCPKCPFVTEFKHHLEYHIRKH), 297 to 319 (FQCDKCSYTCVNKSMLNSHRKSH), and 325 to 349 (YRCADCDYATKYCHSFKLHLRKYGH). 2 disordered regions span residues 365–416 (LVID…PVAT) and 513–536 (QLQQQNQQQSDNEEEEQDDEYERK). Low complexity-rich tracts occupy residues 398–415 (VAAVAPQQQQSQPAQPVA) and 513–522 (QLQQQNQQQS). Residues 523–532 (DNEEEEQDDE) show a composition bias toward acidic residues. Phosphoserine is present on residues Ser537 and Ser540. Residues 603–695 (MTSPEQLKVP…TTSAVAAPPS (93 aa)) are disordered. The segment covering 652–695 (ANTSASSTASSSGNSSNASSNSNGNSSSNSSSNGTTSAVAAPPS) has biased composition (low complexity). 2 consecutive C2H2-type zinc fingers follow at residues 705 to 727 (YECKYCDIFFKDAVLYTIHMGYH) and 733 to 757 (FKCNMCGEKCDGPVGLFVHMARNAH).

It belongs to the hunchback C2H2-type zinc-finger protein family. In terms of tissue distribution, in embryo, expression of maternal transcript is highest in anterior region. Zygotic transcript is expressed in anterior region until the beginning of gastrulation and in posterior region until early gastrulation. After this, it is expressed in developing nervous system.

The protein localises to the nucleus. Its function is as follows. Gap class segmentation protein that controls development of head structures. The sequence is that of Protein hunchback from Drosophila melanogaster (Fruit fly).